A 305-amino-acid polypeptide reads, in one-letter code: UDP-3-O-acyl-N-acetylglucosamine deacetylase (305 aa).

Zn(2+) contacts are provided by histidine 79, histidine 238, and aspartate 242. Histidine 265 serves as the catalytic Proton donor.

This sequence belongs to the LpxC family. It depends on Zn(2+) as a cofactor.

The enzyme catalyses a UDP-3-O-[(3R)-3-hydroxyacyl]-N-acetyl-alpha-D-glucosamine + H2O = a UDP-3-O-[(3R)-3-hydroxyacyl]-alpha-D-glucosamine + acetate. It functions in the pathway glycolipid biosynthesis; lipid IV(A) biosynthesis; lipid IV(A) from (3R)-3-hydroxytetradecanoyl-[acyl-carrier-protein] and UDP-N-acetyl-alpha-D-glucosamine: step 2/6. Catalyzes the hydrolysis of UDP-3-O-myristoyl-N-acetylglucosamine to form UDP-3-O-myristoylglucosamine and acetate, the committed step in lipid A biosynthesis. The chain is UDP-3-O-acyl-N-acetylglucosamine deacetylase from Actinobacillus succinogenes (strain ATCC 55618 / DSM 22257 / CCUG 43843 / 130Z).